Consider the following 474-residue polypeptide: Probable glycine dehydrogenase (decarboxylating) subunit 2 (474 aa).

The residue at position 262 (lysine 262) is an N6-(pyridoxal phosphate)lysine.

This sequence belongs to the GcvP family. C-terminal subunit subfamily. As to quaternary structure, the glycine cleavage system is composed of four proteins: P, T, L and H. In this organism, the P 'protein' is a heterodimer of two subunits. The cofactor is pyridoxal 5'-phosphate.

It catalyses the reaction N(6)-[(R)-lipoyl]-L-lysyl-[glycine-cleavage complex H protein] + glycine + H(+) = N(6)-[(R)-S(8)-aminomethyldihydrolipoyl]-L-lysyl-[glycine-cleavage complex H protein] + CO2. In terms of biological role, the glycine cleavage system catalyzes the degradation of glycine. The P protein binds the alpha-amino group of glycine through its pyridoxal phosphate cofactor; CO(2) is released and the remaining methylamine moiety is then transferred to the lipoamide cofactor of the H protein. In Thermotoga petrophila (strain ATCC BAA-488 / DSM 13995 / JCM 10881 / RKU-1), this protein is Probable glycine dehydrogenase (decarboxylating) subunit 2.